A 55-amino-acid polypeptide reads, in one-letter code: uncharacterized protein (55 aa).

This is an uncharacterized protein from Orgyia pseudotsugata multicapsid polyhedrosis virus (OpMNPV).